The sequence spans 309 residues: Ribonuclease Z (309 aa).

Zn(2+) is bound by residues H63, H65, D67, H68, H145, D216, and H274. D67 serves as the catalytic Proton acceptor.

Belongs to the RNase Z family. Homodimer. Zn(2+) is required as a cofactor.

It catalyses the reaction Endonucleolytic cleavage of RNA, removing extra 3' nucleotides from tRNA precursor, generating 3' termini of tRNAs. A 3'-hydroxy group is left at the tRNA terminus and a 5'-phosphoryl group is left at the trailer molecule.. Zinc phosphodiesterase, which displays some tRNA 3'-processing endonuclease activity. Probably involved in tRNA maturation, by removing a 3'-trailer from precursor tRNA. The sequence is that of Ribonuclease Z from Streptococcus pneumoniae serotype 19F (strain G54).